The chain runs to 244 residues: MLKDEVIKQISTPLTSPAFPRGPYKFHNREYFNIVYRTDMDALRKVVPEPLEIDEPLVRFEIMAMHDTSGLGCYTESGQAIPVSFNGVKGDYLHMMYLDNEPAIAVGRELSAYPKKLGYPKLFVDSDTLVGTLDYGKLRVATATMGYKHKALDANEAKDQICRPNYMLKIIPNYDGSPRICELINAKITDVTVHEAWTGPTRLQLFDHAMAPLNDLPVKEIVSSSHILADIILPRAEVIYDYLK.

The active-site Schiff-base intermediate with acetoacetate is the Lys115.

It belongs to the ADC family. Homododecamer.

It catalyses the reaction acetoacetate + H(+) = acetone + CO2. In terms of biological role, catalyzes the conversion of acetoacetate to acetone and carbon dioxide. The polypeptide is Acetoacetate decarboxylase (Clostridium acetobutylicum (strain ATCC 824 / DSM 792 / JCM 1419 / IAM 19013 / LMG 5710 / NBRC 13948 / NRRL B-527 / VKM B-1787 / 2291 / W)).